A 160-amino-acid polypeptide reads, in one-letter code: S-adenosylmethionine decarboxylase proenzyme (160 aa).

The active-site Schiff-base intermediate with substrate; via pyruvic acid is serine 73. A Pyruvic acid (Ser); by autocatalysis modification is found at serine 73. The active-site Proton acceptor; for processing activity is histidine 78. The active-site Proton donor; for catalytic activity is cysteine 93.

Belongs to the prokaryotic AdoMetDC family. Type 1 subfamily. As to quaternary structure, heterotetramer of two alpha and two beta chains arranged as a dimer of alpha/beta heterodimers. It depends on pyruvate as a cofactor. In terms of processing, is synthesized initially as an inactive proenzyme. Formation of the active enzyme involves a self-maturation process in which the active site pyruvoyl group is generated from an internal serine residue via an autocatalytic post-translational modification. Two non-identical subunits are generated from the proenzyme in this reaction, and the pyruvate is formed at the N-terminus of the alpha chain, which is derived from the carboxyl end of the proenzyme. The post-translation cleavage follows an unusual pathway, termed non-hydrolytic serinolysis, in which the side chain hydroxyl group of the serine supplies its oxygen atom to form the C-terminus of the beta chain, while the remainder of the serine residue undergoes an oxidative deamination to produce ammonia and the pyruvoyl group blocking the N-terminus of the alpha chain.

It catalyses the reaction S-adenosyl-L-methionine + H(+) = S-adenosyl 3-(methylsulfanyl)propylamine + CO2. Its pathway is amine and polyamine biosynthesis; S-adenosylmethioninamine biosynthesis; S-adenosylmethioninamine from S-adenosyl-L-methionine: step 1/1. In terms of biological role, catalyzes the decarboxylation of S-adenosylmethionine to S-adenosylmethioninamine (dcAdoMet), the propylamine donor required for the synthesis of the polyamines spermine and spermidine from the diamine putrescine. The polypeptide is S-adenosylmethionine decarboxylase proenzyme (Pseudomonas aeruginosa (strain LESB58)).